The following is a 248-amino-acid chain: Triosephosphate isomerase (248 aa).

9–11 (NWK) contributes to the substrate binding site. His-94 functions as the Electrophile in the catalytic mechanism. The Proton acceptor role is filled by Glu-166. Substrate is bound by residues Gly-172, Ser-211, and 232–233 (GG).

It belongs to the triosephosphate isomerase family. Homodimer.

The protein resides in the cytoplasm. It carries out the reaction D-glyceraldehyde 3-phosphate = dihydroxyacetone phosphate. It functions in the pathway carbohydrate biosynthesis; gluconeogenesis. The protein operates within carbohydrate degradation; glycolysis; D-glyceraldehyde 3-phosphate from glycerone phosphate: step 1/1. In terms of biological role, involved in the gluconeogenesis. Catalyzes stereospecifically the conversion of dihydroxyacetone phosphate (DHAP) to D-glyceraldehyde-3-phosphate (G3P). The sequence is that of Triosephosphate isomerase from Vesicomyosocius okutanii subsp. Calyptogena okutanii (strain HA).